The sequence spans 70 residues: ATP synthase subunit c (70 aa).

The next 2 membrane-spanning stretches (helical) occupy residues 4–24 and 47–67; these read IAAGIAMAGAAIGGGVGDGIV and FIGVGLVEAMPIIAFVVALMV.

The protein belongs to the ATPase C chain family. F-type ATPases have 2 components, F(1) - the catalytic core - and F(0) - the membrane proton channel. F(1) has five subunits: alpha(3), beta(3), gamma(1), delta(1), epsilon(1). F(0) has three main subunits: a(1), b(2) and c(10-14). The alpha and beta chains form an alternating ring which encloses part of the gamma chain. F(1) is attached to F(0) by a central stalk formed by the gamma and epsilon chains, while a peripheral stalk is formed by the delta and b chains.

The protein localises to the cell membrane. F(1)F(0) ATP synthase produces ATP from ADP in the presence of a proton or sodium gradient. F-type ATPases consist of two structural domains, F(1) containing the extramembraneous catalytic core and F(0) containing the membrane proton channel, linked together by a central stalk and a peripheral stalk. During catalysis, ATP synthesis in the catalytic domain of F(1) is coupled via a rotary mechanism of the central stalk subunits to proton translocation. Its function is as follows. Key component of the F(0) channel; it plays a direct role in translocation across the membrane. A homomeric c-ring of between 10-14 subunits forms the central stalk rotor element with the F(1) delta and epsilon subunits. This chain is ATP synthase subunit c, found in Levilactobacillus brevis (strain ATCC 367 / BCRC 12310 / CIP 105137 / JCM 1170 / LMG 11437 / NCIMB 947 / NCTC 947) (Lactobacillus brevis).